Here is a 362-residue protein sequence, read N- to C-terminus: S-adenosylmethionine:tRNA ribosyltransferase-isomerase (362 aa).

This sequence belongs to the QueA family. In terms of assembly, monomer.

Its subcellular location is the cytoplasm. It catalyses the reaction 7-aminomethyl-7-carbaguanosine(34) in tRNA + S-adenosyl-L-methionine = epoxyqueuosine(34) in tRNA + adenine + L-methionine + 2 H(+). It participates in tRNA modification; tRNA-queuosine biosynthesis. In terms of biological role, transfers and isomerizes the ribose moiety from AdoMet to the 7-aminomethyl group of 7-deazaguanine (preQ1-tRNA) to give epoxyqueuosine (oQ-tRNA). This is S-adenosylmethionine:tRNA ribosyltransferase-isomerase from Methylobacterium sp. (strain 4-46).